The following is a 106-amino-acid chain: P4 prophage-derived uncharacterized protein t2655 (106 aa).

This Salmonella typhi protein is P4 prophage-derived uncharacterized protein t2655.